A 325-amino-acid chain; its full sequence is ATPase ASNA1 homolog 2 (325 aa).

22 to 29 is an ATP binding site; sequence KGGVGKTT. Residue D51 is part of the active site. 2 residues coordinate ATP: E231 and N258. Zn(2+) is bound by residues C267 and C270.

It belongs to the arsA ATPase family. Homodimer.

It is found in the cytoplasm. The protein localises to the endoplasmic reticulum. ATPase required for the post-translational delivery of tail-anchored (TA) proteins to the endoplasmic reticulum. Recognizes and selectively binds the transmembrane domain of TA proteins in the cytosol. This complex then targets to the endoplasmic reticulum by membrane-bound receptors, where the tail-anchored protein is released for insertion. This process is regulated by ATP binding and hydrolysis. ATP binding drives the homodimer towards the closed dimer state, facilitating recognition of newly synthesized TA membrane proteins. ATP hydrolysis is required for insertion. Subsequently, the homodimer reverts towards the open dimer state, lowering its affinity for the membrane-bound receptor, and returning it to the cytosol to initiate a new round of targeting. This chain is ATPase ASNA1 homolog 2, found in Paramecium tetraurelia.